The following is a 393-amino-acid chain: Bifunctional enzyme Fae/Hps (393 aa).

The formaldehyde-activating enzyme stretch occupies residues 1–161; sequence MYQIGEALVG…YEKDRGAHAV (161 aa). Histidine 17 functions as the Proton donor in the catalytic mechanism. Substrate contacts are provided by aspartate 19, leucine 48, lysine 66, threonine 68, and glutamine 83. Residues 162–393 are 3-hexulose-6-phosphate synthase; that stretch reads MGFKVQRLWD…IDQFRVMTDF (232 aa).

This sequence in the N-terminal section; belongs to the formaldehyde-activating enzyme family. It in the C-terminal section; belongs to the HPS/KGPDC family. HPS subfamily.

The catalysed reaction is 5,6,7,8-tetrahydromethanopterin + formaldehyde = 5,10-methylenetetrahydromethanopterin + H2O. It catalyses the reaction D-ribulose 5-phosphate + formaldehyde = D-arabino-hex-3-ulose 6-phosphate. It participates in carbohydrate biosynthesis; D-ribose 5-phosphate biosynthesis. Catalyzes the condensation of formaldehyde with tetrahydromethanopterin (H(4)MPT) to 5,10-methylenetetrahydromethanopterin. Its function is as follows. Catalyzes the reversible formation of ribulose-5-phosphate and formaldehyde from 3-hexulose-6-phosphate. The sequence is that of Bifunctional enzyme Fae/Hps from Methanosphaerula palustris (strain ATCC BAA-1556 / DSM 19958 / E1-9c).